We begin with the raw amino-acid sequence, 624 residues long: Phosphoenolpyruvate carboxykinase [GTP] (624 aa).

Residues R88 and 222 to 224 (YGG) contribute to the substrate site. Mn(2+) is bound by residues K231 and H250. Residue S272 participates in substrate binding. 273-278 (MCGKTS) provides a ligand contact to GTP. C274 is a catalytic residue. D291 provides a ligand contact to Mn(2+). 386 to 388 (NAR) contacts substrate. Residues R388 and R420 each contribute to the GTP site.

Belongs to the phosphoenolpyruvate carboxykinase [GTP] family. Requires Mn(2+) as cofactor.

It is found in the cytoplasm. It carries out the reaction oxaloacetate + GTP = phosphoenolpyruvate + GDP + CO2. It functions in the pathway carbohydrate biosynthesis; gluconeogenesis. Catalyzes the conversion of oxaloacetate (OAA) to phosphoenolpyruvate (PEP), the rate-limiting step in the metabolic pathway that produces glucose from lactate and other precursors derived from the citric acid cycle. This Pyrococcus furiosus (strain ATCC 43587 / DSM 3638 / JCM 8422 / Vc1) protein is Phosphoenolpyruvate carboxykinase [GTP].